The sequence spans 467 residues: MNYSLAVDIGASSGRLIVGECNKKIQLTEIHRFENQIIEKNGQFCWDVDALFSEIKTGLKKCREAGIEPVSMGIDTWAVDFVLLDEHDKPLTDAVSYRDPRTDGVMEEVIEQFMKERLYLETGIQFQQFNTIYQLYALKKQHPDIFKKAKSFLMIPDYFHFLLTGKKANEYTNATTTQLVNAFTKKWDKDIIEALGFNPDMFQEIKLPTESLGKLKSEWVEEVGFDLEVILPATHDTGSAVVAVPKVADTIYLSSGTWSLIGVENSFPICVTKALDYNFTNEGGMNYQFRFLKNIMGLWMIQEVRRNYDNRYSFAQLVELSKGISFKSTVDVNDPRFLKPTNMIKEIQRYCQETGQQAPELPGEVAKCVFESLAESYTSAVAEIEDIFEKDFKSINVIGGGCRNELLNQLIADRTKKDVFAGPIEATAIGNLVAQWMALGEIESIQQARKLIYDSFDVKRYVSADRE.

11-15 (ASSGR) contributes to the ATP binding site. Residues alanine 78 and 235–237 (HDT) contribute to the substrate site. The Proton acceptor role is filled by aspartate 236. Threonine 257 is an ATP binding site. Asparagine 294 lines the substrate pocket. An ATP-binding site is contributed by glutamine 302. Cysteine 351 and cysteine 368 are disulfide-bonded. Residue glycine 400 participates in ATP binding.

It belongs to the rhamnulokinase family. Mg(2+) is required as a cofactor.

The catalysed reaction is L-rhamnulose + ATP = L-rhamnulose 1-phosphate + ADP + H(+). Its pathway is carbohydrate degradation; L-rhamnose degradation; glycerone phosphate from L-rhamnose: step 2/3. Functionally, involved in the catabolism of L-rhamnose (6-deoxy-L-mannose). Catalyzes the transfer of the gamma-phosphate group from ATP to the 1-hydroxyl group of L-rhamnulose to yield L-rhamnulose 1-phosphate. This chain is Rhamnulokinase, found in Halalkalibacterium halodurans (strain ATCC BAA-125 / DSM 18197 / FERM 7344 / JCM 9153 / C-125) (Bacillus halodurans).